A 305-amino-acid chain; its full sequence is GTP cyclohydrolase FolE2 (305 aa).

The protein belongs to the GTP cyclohydrolase IV family.

It carries out the reaction GTP + H2O = 7,8-dihydroneopterin 3'-triphosphate + formate + H(+). Its pathway is cofactor biosynthesis; 7,8-dihydroneopterin triphosphate biosynthesis; 7,8-dihydroneopterin triphosphate from GTP: step 1/1. Converts GTP to 7,8-dihydroneopterin triphosphate. This is GTP cyclohydrolase FolE2 from Xanthomonas axonopodis pv. citri (strain 306).